A 236-amino-acid chain; its full sequence is Small ribosomal subunit protein uS2c (236 aa).

This sequence belongs to the universal ribosomal protein uS2 family.

The protein resides in the plastid. It is found in the chloroplast. This chain is Small ribosomal subunit protein uS2c (rps2), found in Illicium oligandrum (Star anise).